A 105-amino-acid polypeptide reads, in one-letter code: UPF0060 membrane protein Rmet_4032 (105 aa).

Helical transmembrane passes span 4 to 24 (VGLYLLTALAEILGCYLPYLW), 28 to 48 (GASPWVLLPGAASLAVFAWLL), 60 to 80 (AAYGGVYIAMAIAWLWAVDGV), and 82 to 102 (PSPWDIAGVAVALGGMAIIVF).

The protein belongs to the UPF0060 family.

The protein localises to the cell inner membrane. This chain is UPF0060 membrane protein Rmet_4032, found in Cupriavidus metallidurans (strain ATCC 43123 / DSM 2839 / NBRC 102507 / CH34) (Ralstonia metallidurans).